The sequence spans 984 residues: Shutoff protein (984 aa).

The tract at residues 131 to 231 (GVAAESDPSD…DLERDALVAP (101 aa)) is disordered. Positions 137–147 (DPSDDEPDPEP) are enriched in acidic residues. Over residues 148–159 (EYDHREADHDSD) the composition is skewed to basic and acidic residues. Residues 176–186 (VDEEPQDDSPS) show a composition bias toward acidic residues. Over residues 190-202 (TASTVIEEAQTSA) the composition is skewed to polar residues. Residues 205–216 (DSHDDDTHRDDG) show a composition bias toward basic and acidic residues. The segment at 411–476 (LMETLLQPFA…AVRYTATLEL (66 aa)) is binding to host EIF4G. Residues 479-597 (RVFREPSMVK…RLYSLPNPTA (119 aa)) form the RRM domain. Disordered regions lie at residues 810-853 (GVYK…GNRA) and 876-984 (KVGP…RQEE). At tyrosine 812 the chain carries Phosphotyrosine; by host. Over residues 913–923 (AGGRRFGRRNT) the composition is skewed to basic residues. Over residues 945–958 (RGQQGEHPTTSPSA) the composition is skewed to low complexity.

The protein belongs to the adenoviridae shutoff protein family. Monomer. Interacts with hexon protein; this interaction allows chaperoning and trimerization of hexon proteins. Interacts (via N-terminus) with host initiation factor EIF4G (via C-terminus). Interacts (via RRM domain) with viral mRNAs that contain the tripartite leader; this interaction allows ribosome shunting and expression of viral late mRNAs. Post-translationally, might be cleaved by the viral protease. In terms of processing, phosphorylated. Tyrosine phosphorylation enhances preferential binding to tripartite leader mRNAs and allows ribosome shunting. Methylated. Asymmetric dimethylation by host PRMT1 of the Arg/Gly-rich region may regulate shutoff protein binding to hexon and promote the capsid assembly in the nucleus.

It is found in the host cytoplasm. In terms of biological role, protein that inhibits host translation while promoting late viral translation by ribosome shunting. Blocks host cap-dependent translation by binding to eIF4G, displacing MKNK1 from cap initiation complexes and preventing EIF4E phosphorylation. Binds to the tripartite leader sequence of viral late mRNAs and recruits host eIF4G, PABPC1/poly-A binding protein and 40S ribosomes subunits on viral mRNAs, allowing ribosome shunting and efficient translation of late viral mRNAs even though conventional translation via ribosome scanning from the cap has been shut off in the host cell. During assembly, acts as a chaperone protein that helps hexon proteins assembly into trimers. The protein is Shutoff protein of Galliformes (FAdV-1).